The primary structure comprises 346 residues: NADH-quinone oxidoreductase subunit H (346 aa).

8 consecutive transmembrane segments (helical) span residues 6-26 (ILFW…ACAY), 76-96 (IMYL…WSVV), 128-148 (ILFL…AGWA), 166-186 (ISYE…TGSL), 198-218 (LWNI…VAMF), 260-280 (ITMS…PFGI), 289-309 (LFGL…FVWV), and 324-344 (LGWK…SLYI).

This sequence belongs to the complex I subunit 1 family. NDH-1 is composed of 14 different subunits. Subunits NuoA, H, J, K, L, M, N constitute the membrane sector of the complex.

The protein resides in the cell inner membrane. It catalyses the reaction a quinone + NADH + 5 H(+)(in) = a quinol + NAD(+) + 4 H(+)(out). Functionally, NDH-1 shuttles electrons from NADH, via FMN and iron-sulfur (Fe-S) centers, to quinones in the respiratory chain. The immediate electron acceptor for the enzyme in this species is believed to be ubiquinone. Couples the redox reaction to proton translocation (for every two electrons transferred, four hydrogen ions are translocated across the cytoplasmic membrane), and thus conserves the redox energy in a proton gradient. This subunit may bind ubiquinone. This is NADH-quinone oxidoreductase subunit H from Leptospira borgpetersenii serovar Hardjo-bovis (strain JB197).